The following is a 317-amino-acid chain: Beta-ketoacyl-[acyl-carrier-protein] synthase III (317 aa).

Active-site residues include cysteine 112 and histidine 244. Residues 245-249 (QANLR) form an ACP-binding region. Asparagine 274 is an active-site residue.

This sequence belongs to the thiolase-like superfamily. FabH family. Homodimer.

The protein localises to the cytoplasm. It carries out the reaction malonyl-[ACP] + acetyl-CoA + H(+) = 3-oxobutanoyl-[ACP] + CO2 + CoA. Its pathway is lipid metabolism; fatty acid biosynthesis. Its function is as follows. Catalyzes the condensation reaction of fatty acid synthesis by the addition to an acyl acceptor of two carbons from malonyl-ACP. Catalyzes the first condensation reaction which initiates fatty acid synthesis and may therefore play a role in governing the total rate of fatty acid production. Possesses both acetoacetyl-ACP synthase and acetyl transacylase activities. Its substrate specificity determines the biosynthesis of branched-chain and/or straight-chain of fatty acids. This chain is Beta-ketoacyl-[acyl-carrier-protein] synthase III, found in Shigella sonnei (strain Ss046).